The sequence spans 129 residues: Holo-[acyl-carrier-protein] synthase (129 aa).

Residues D8 and E60 each coordinate Mg(2+).

Belongs to the P-Pant transferase superfamily. AcpS family. Mg(2+) serves as cofactor.

It localises to the cytoplasm. It carries out the reaction apo-[ACP] + CoA = holo-[ACP] + adenosine 3',5'-bisphosphate + H(+). Its function is as follows. Transfers the 4'-phosphopantetheine moiety from coenzyme A to a Ser of acyl-carrier-protein. This Anaeromyxobacter sp. (strain Fw109-5) protein is Holo-[acyl-carrier-protein] synthase.